Consider the following 386-residue polypeptide: Alpha-D-kanosaminyltransferase (386 aa).

Belongs to the glycosyltransferase group 1 family.

It catalyses the reaction 2'-deamino-2'-hydroxyneamine + UDP-alpha-D-kanosamine = kanamycin A + UDP + H(+). It carries out the reaction neamine + UDP-alpha-D-kanosamine = kanamycin B + UDP + H(+). The enzyme catalyses paromamine + UDP-alpha-D-kanosamine = kanamycin C + UDP + H(+). The catalysed reaction is 2'-deamino-2'-hydroxyparomamine + UDP-alpha-D-kanosamine = kanamycin X + UDP + H(+). The protein operates within antibiotic biosynthesis; kanamycin biosynthesis. Its function is as follows. Glycosyltransferase involved in the biosynthesis of kanamycins by catalyzing the transfer of the hexose kanosamine from UDP-alpha-D-kanosamine to disaccharide precursors. Can also use UDP-alpha-D-glucose as sugar donor with much lower efficiency. The chain is Alpha-D-kanosaminyltransferase (kanE) from Streptomyces kanamyceticus.